The following is a 610-amino-acid chain: Glutamine--fructose-6-phosphate aminotransferase [isomerizing] (610 aa).

Residue C2 is the Nucleophile; for GATase activity of the active site. Residues 2-220 form the Glutamine amidotransferase type-2 domain; sequence CGIISAISKK…EGDIAILSHK (219 aa). SIS domains are found at residues 289–429 and 461–600; these read AHAL…LKTN and LAKE…IDKP. K605 acts as the For Fru-6P isomerization activity in catalysis.

As to quaternary structure, homodimer.

Its subcellular location is the cytoplasm. It catalyses the reaction D-fructose 6-phosphate + L-glutamine = D-glucosamine 6-phosphate + L-glutamate. Its function is as follows. Catalyzes the first step in hexosamine metabolism, converting fructose-6P into glucosamine-6P using glutamine as a nitrogen source. The sequence is that of Glutamine--fructose-6-phosphate aminotransferase [isomerizing] from Buchnera aphidicola subsp. Baizongia pistaciae (strain Bp).